The chain runs to 317 residues: MPVLGSQRRLLGSLNCTPPATLPLTLAPNRTGPQCLEVSIPDGLFLSLGLVSLVENVLVVAAIAKNRNLHSPMYYFICCLAMSDLLVSVSNVLETAVMLLLEAGVLATRAAVVQQLDNVIDVLICSSMVSSLCFLGAIAVDRYISIFYALRYHSVVTLPRAWRIIAAIWVASILTSVLSITYYNHTVVLLCLVGFFIAMLALMAVLYVHMLARACQHARGIARLQKRQRPIHQGFGLKGAATLTILLGVFFLCWGPFFLHLSLIVLCPQHPTCGCIFKNFNLFLALIICNAIVDPLIYAFRSQELRKTLQEVLQCSW.

Residues M1 to E37 are Extracellular-facing. The N-linked (GlcNAc...) asparagine glycan is linked to N29. A helical membrane pass occupies residues V38–I63. At A64–P72 the chain is on the cytoplasmic side. Residues M73–L93 form a helical membrane-spanning segment. Residues E94–N118 lie on the Extracellular side of the membrane. The chain crosses the membrane as a helical span at residues V119–V140. At D141–R163 the chain is on the cytoplasmic side. The helical transmembrane segment at I164–Y183 threads the bilayer. Topologically, residues N184 to C191 are extracellular. The helical transmembrane segment at L192–L211 threads the bilayer. The Cytoplasmic portion of the chain corresponds to A212–A240. Residues A241–L266 form a helical membrane-spanning segment. The Extracellular segment spans residues C267 to N279. A helical membrane pass occupies residues F280–F300. The Cytoplasmic portion of the chain corresponds to R301 to W317. A lipid anchor (S-palmitoyl cysteine) is attached at C315.

The protein belongs to the G-protein coupled receptor 1 family. In terms of assembly, interacts with MGRN1, but does not undergo MGRN1-mediated ubiquitination; this interaction competes with GNAS-binding and thus inhibits agonist-induced cAMP production. Interacts with OPN3; the interaction results in a decrease in MC1R-mediated cAMP signaling and ultimately a decrease in melanin production in melanocytes.

Its subcellular location is the cell membrane. Functionally, receptor for MSH (alpha, beta and gamma) and ACTH. The activity of this receptor is mediated by G proteins which activate adenylate cyclase. Mediates melanogenesis, the production of eumelanin (black/brown) and phaeomelanin (red/yellow), via regulation of cAMP signaling in melanocytes. This chain is Melanocyte-stimulating hormone receptor (MC1R), found in Ovis aries (Sheep).